We begin with the raw amino-acid sequence, 532 residues long: FAD-dependent monooxygenase hkm7 (532 aa).

FAD contacts are provided by residues 191-193 (RIY) and Asp261.

This sequence belongs to the PheA/TfdB FAD monooxygenase family.

It functions in the pathway secondary metabolite biosynthesis. FAD-dependent monooxygenase; part of the gene cluster that mediates the biosynthesis of hancockiamides, an unusual new family of N-cinnamoylated piperazines. The NRPS hkm10 and the NmrA-like reductase hkm9 are proposed to convert two molecules of L-Phe to the intermediary piperazine called xenocockiamide A. Xenocockiamide A is then converted to hancockiamide D via a series of hydroxylations and O-methylations. The tyrosinase hkm6 may catalyze an aromatic hydroxylation, then the 2-oxoglutarate-dependent Fe(II) dioxygenase hkm4 and the FAD-dependent phenol hydroxylase hkm7 may catalyze consecutive hydroxylations to install 2 more hydroxy groups, and the methyltransferase hkm8 probably catalyzes two methylations using 2 molecules of S-adenosyl-L-methionine (SAM). The NRPS hkm11 activates and transfers trans-cinnamate supplied by the PAL hkm12 to hancockiamide D and produces hancockiamide A. NRPS Hkm11 has the flexibility to tolerate the bulky hancockiamide G as a substrate and the absence of the acetyl-transferase hkm3 opens up the opportunity for hkm11 to introduce a second N-cinnamoyl moiety. The cytochrome P450 monooxygenase hkm5 catalyzes the methylenedioxy bridge formation, converting hancockiamide A into hancockiamide G. Hkm5 can also convert hancockiamide B into hancockiamide C, and hancockiamide D into hancockiamide H. The N-acetyltransferase hkm3 finally transfers an acetyl group to 1-N of piperazine, converting hancockiamide A into hancockiamide B and hancockiamide G into hancockiamide C. The protein is FAD-dependent monooxygenase hkm7 of Aspergillus hancockii.